The sequence spans 165 residues: Type 3 secretion system regulator YopR (165 aa).

Belongs to the YopR family.

The protein localises to the secreted. Functionally, may be involved in the regulation of the assembly of the type III secretion system (T3SS), also called injectisome, which is used to inject bacterial effector proteins into eukaryotic host cells. May control the secretion and/or polymerization of YscF/SctF, the principal component of the needle filament, thereby impacting the assembly of the T3SS. Involved in pathogenesis. In Yersinia pestis, this protein is Type 3 secretion system regulator YopR.